A 274-amino-acid chain; its full sequence is Dermonecrotic toxin SdSicTox-betaIIB1bxii (274 aa).

The active site involves histidine 5. Mg(2+) contacts are provided by glutamate 25 and aspartate 27. Histidine 41 acts as the Nucleophile in catalysis. 2 disulfide bridges follow: cysteine 45/cysteine 51 and cysteine 47/cysteine 190. Mg(2+) is bound at residue aspartate 85.

Belongs to the arthropod phospholipase D family. Class II subfamily. Requires Mg(2+) as cofactor. As to expression, expressed by the venom gland.

It localises to the secreted. It catalyses the reaction an N-(acyl)-sphingosylphosphocholine = an N-(acyl)-sphingosyl-1,3-cyclic phosphate + choline. The catalysed reaction is an N-(acyl)-sphingosylphosphoethanolamine = an N-(acyl)-sphingosyl-1,3-cyclic phosphate + ethanolamine. The enzyme catalyses a 1-acyl-sn-glycero-3-phosphocholine = a 1-acyl-sn-glycero-2,3-cyclic phosphate + choline. It carries out the reaction a 1-acyl-sn-glycero-3-phosphoethanolamine = a 1-acyl-sn-glycero-2,3-cyclic phosphate + ethanolamine. In terms of biological role, dermonecrotic toxins cleave the phosphodiester linkage between the phosphate and headgroup of certain phospholipids (sphingolipid and lysolipid substrates), forming an alcohol (often choline) and a cyclic phosphate. This toxin acts on sphingomyelin (SM). It may also act on ceramide phosphoethanolamine (CPE), lysophosphatidylcholine (LPC) and lysophosphatidylethanolamine (LPE), but not on lysophosphatidylserine (LPS), and lysophosphatidylglycerol (LPG). It acts by transphosphatidylation, releasing exclusively cyclic phosphate products as second products. Induces dermonecrosis, hemolysis, increased vascular permeability, edema, inflammatory response, and platelet aggregation. The protein is Dermonecrotic toxin SdSicTox-betaIIB1bxii of Sicarius cf. damarensis (strain GJB-2008) (Six-eyed sand spider).